Reading from the N-terminus, the 141-residue chain is Nucleoside diphosphate kinase (141 aa).

The ATP site is built by lysine 11, phenylalanine 59, arginine 87, threonine 93, arginine 104, and asparagine 114. The active-site Pros-phosphohistidine intermediate is histidine 117.

Belongs to the NDK family. Homotetramer. Mg(2+) is required as a cofactor.

The protein localises to the cytoplasm. The catalysed reaction is a 2'-deoxyribonucleoside 5'-diphosphate + ATP = a 2'-deoxyribonucleoside 5'-triphosphate + ADP. It carries out the reaction a ribonucleoside 5'-diphosphate + ATP = a ribonucleoside 5'-triphosphate + ADP. Major role in the synthesis of nucleoside triphosphates other than ATP. The ATP gamma phosphate is transferred to the NDP beta phosphate via a ping-pong mechanism, using a phosphorylated active-site intermediate. This chain is Nucleoside diphosphate kinase, found in Polynucleobacter asymbioticus (strain DSM 18221 / CIP 109841 / QLW-P1DMWA-1) (Polynucleobacter necessarius subsp. asymbioticus).